A 125-amino-acid chain; its full sequence is Small ribosomal subunit protein uS13 (125 aa).

It belongs to the universal ribosomal protein uS13 family. Part of the 30S ribosomal subunit. Forms a loose heterodimer with protein S19. Forms two bridges to the 50S subunit in the 70S ribosome.

Located at the top of the head of the 30S subunit, it contacts several helices of the 16S rRNA. In the 70S ribosome it contacts the 23S rRNA (bridge B1a) and protein L5 of the 50S subunit (bridge B1b), connecting the 2 subunits; these bridges are implicated in subunit movement. Contacts the tRNAs in the A and P-sites. The chain is Small ribosomal subunit protein uS13 from Rickettsia akari (strain Hartford).